The sequence spans 236 residues: 4-aminobenzoate synthase (236 aa).

Positions 87, 94, 148, 180, 184, and 187 each coordinate Fe(2+).

This sequence belongs to the CADD family. In terms of assembly, homodimer. It depends on Fe(2+) as a cofactor. Mn(2+) is required as a cofactor.

Involved in de novo para-aminobenzoate (PABA) biosynthesis. Acts as a self-sacrificing or 'suicide' enzyme that utilizes its own active site tyrosine residue(s) as the substrate for PABA synthesis. The side chain of the tyrosine residue is released from the protein backbone via cleavage of the C(alpha)-C(beta) bond, leaving a glycine in place of the original tyrosine residue. Reaction requires O(2) and a reduced dimetal cofactor. This Chlamydia muridarum (strain MoPn / Nigg) protein is 4-aminobenzoate synthase.